The sequence spans 85 residues: Omega-conotoxin-like Am6.5 (85 aa).

Positions 1 to 19 (MCILIVAVLFLTAWTFVMA) are cleaved as a signal peptide. The propeptide occupies 20–53 (DDPRDEPDTVVRGGKLFSRARDEMNPAASKLNER). Disulfide bonds link Cys55-Cys73, Cys62-Cys77, and Cys72-Cys81. Gln84 is modified (glutamine amide).

It belongs to the conotoxin O1 family. Post-translationally, is not hydroxylated. Expressed by the venom duct.

It is found in the secreted. Functionally, omega-conotoxins act at presynaptic membranes, they bind and block voltage-gated calcium channels (Cav). The polypeptide is Omega-conotoxin-like Am6.5 (Conus amadis (Amadis cone)).